An 83-amino-acid chain; its full sequence is MVTIRLARGGSKKRPFYHLTVTDSRNARDGRFVERIGFFNPVASGAEVKLSVDQERAAYWLGQGAQPSERVAHLLKEAAKATA.

Belongs to the bacterial ribosomal protein bS16 family.

The polypeptide is Small ribosomal subunit protein bS16 (Azotobacter vinelandii (strain DJ / ATCC BAA-1303)).